Consider the following 111-residue polypeptide: Gastrula zinc finger protein XlCGF32.1 (111 aa).

C2H2-type zinc fingers lie at residues 6 to 28, 34 to 56, 62 to 84, and 89 to 111; these read FDCT…FLCH, FVCV…LRIH, SVCP…MRIH, and FMCS…LQIH.

This sequence belongs to the krueppel C2H2-type zinc-finger protein family.

The protein resides in the nucleus. Functionally, may be involved in transcriptional regulation. In Xenopus laevis (African clawed frog), this protein is Gastrula zinc finger protein XlCGF32.1.